A 452-amino-acid polypeptide reads, in one-letter code: Cobyrinate a,c-diamide synthase (452 aa).

In terms of domain architecture, GATase cobBQ-type spans 246 to 439 (TLAYALDDAF…LHVHFYQDEQ (194 aa)). Cys-328 (nucleophile) is an active-site residue.

Belongs to the CobB/CbiA family. Mg(2+) is required as a cofactor.

The catalysed reaction is cob(II)yrinate + 2 L-glutamine + 2 ATP + 2 H2O = cob(II)yrinate a,c diamide + 2 L-glutamate + 2 ADP + 2 phosphate + 2 H(+). The protein operates within cofactor biosynthesis; adenosylcobalamin biosynthesis; cob(II)yrinate a,c-diamide from sirohydrochlorin (anaerobic route): step 10/10. Its function is as follows. Catalyzes the ATP-dependent amidation of the two carboxylate groups at positions a and c of cobyrinate, using either L-glutamine or ammonia as the nitrogen source. In Streptococcus sanguinis (strain SK36), this protein is Cobyrinate a,c-diamide synthase.